A 238-amino-acid polypeptide reads, in one-letter code: MGKVRLLVQRRGRGSPTFRSPTHRAAGKVKIPTFDGDLVKGKVVALIKDSIHYAPLMVVKWENGAQSLLPAPLGISVGDTVYYGKEAPNAIGSIKPLSEIPEGTKIYMLENNPGDGGKLVRASGDFALLVQKLGDKVIVQLPSGQFKTLSANARAVIGVIAGGGRKEKPFVKAGNKYYWASSRNRHWPVVNGVKKNASDHPFGGKRHSNHSKPFTVSKWAPPGRKVGYIGARKTGRGK.

A disordered region spans residues 197-219 (ASDHPFGGKRHSNHSKPFTVSKW).

It belongs to the universal ribosomal protein uL2 family. As to quaternary structure, part of the 50S ribosomal subunit. Forms a bridge to the 30S subunit in the 70S ribosome.

Functionally, one of the primary rRNA binding proteins. Required for association of the 30S and 50S subunits to form the 70S ribosome, for tRNA binding and peptide bond formation. It has been suggested to have peptidyltransferase activity; this is somewhat controversial. Makes several contacts with the 16S rRNA in the 70S ribosome. The chain is Large ribosomal subunit protein uL2 from Nanoarchaeum equitans (strain Kin4-M).